Here is a 113-residue protein sequence, read N- to C-terminus: Large ribosomal subunit protein uL22 (113 aa).

It belongs to the universal ribosomal protein uL22 family. In terms of assembly, part of the 50S ribosomal subunit.

In terms of biological role, this protein binds specifically to 23S rRNA; its binding is stimulated by other ribosomal proteins, e.g. L4, L17, and L20. It is important during the early stages of 50S assembly. It makes multiple contacts with different domains of the 23S rRNA in the assembled 50S subunit and ribosome. The globular domain of the protein is located near the polypeptide exit tunnel on the outside of the subunit, while an extended beta-hairpin is found that lines the wall of the exit tunnel in the center of the 70S ribosome. The chain is Large ribosomal subunit protein uL22 from Symbiobacterium thermophilum (strain DSM 24528 / JCM 14929 / IAM 14863 / T).